Here is a 258-residue protein sequence, read N- to C-terminus: MIMNSAVSLVILLSLLCEAHTVVLLNPTDSSLPANNFTDTEAALSTPLESADIPKARRKRYISQNDMIAILDYHNQVRGKVFPPAANMEYMVWDENLAKSAEAWAATCIWDHGPSYLLRFLGQNLSVRTGRYRSILQLVKPWYDEVKDYAFPYPQDCNPRCPMRCFGPMCTHYTQMVWATSNRIGCAIHTCQNMNVWGSVWRRAVYLVCNYAPKGNWIGEAPYKVGVPCSSCPPSYGGACTDNLCFPGVTTNYLYWFK.

A signal peptide spans 1–21 (MIMNSAVSLVILLSLLCEAHT). The propeptide occupies 22 to 60 (VVLLNPTDSSLPANNFTDTEAALSTPLESADIPKARRKR). N-linked (GlcNAc...) asparagine glycosylation is found at Asn-36 and Asn-124. The 141-residue stretch at 71 to 211 (LDYHNQVRGK…RRAVYLVCNY (141 aa)) folds into the SCP domain.

Belongs to the CRISP family. Post-translationally, N-glycosylated. In terms of tissue distribution, weakly expressed. Expressed at low level in prostate, mammary gland, salivary gland and thyroid gland.

It localises to the secreted. In terms of biological role, serine protease inhibitor which displays weak inhibitory activity against trypsin. May play a role in facial patterning during embryonic development. This Mus musculus (Mouse) protein is Peptidase inhibitor 15 (Pi15).